A 401-amino-acid polypeptide reads, in one-letter code: Argininosuccinate synthase (401 aa).

Residues 7–15 (AYSGGLDTS) and Ala34 each bind ATP. Residues Tyr85 and Ser90 each coordinate L-citrulline. Gly115 contacts ATP. L-aspartate is bound by residues Thr117, Asn121, and Asp122. Asn121 provides a ligand contact to L-citrulline. L-citrulline contacts are provided by Arg125, Ser174, Ser183, Glu259, and Tyr271.

The protein belongs to the argininosuccinate synthase family. Type 1 subfamily. As to quaternary structure, homotetramer.

The protein localises to the cytoplasm. It catalyses the reaction L-citrulline + L-aspartate + ATP = 2-(N(omega)-L-arginino)succinate + AMP + diphosphate + H(+). It functions in the pathway amino-acid biosynthesis; L-arginine biosynthesis; L-arginine from L-ornithine and carbamoyl phosphate: step 2/3. This chain is Argininosuccinate synthase, found in Desulforamulus reducens (strain ATCC BAA-1160 / DSM 100696 / MI-1) (Desulfotomaculum reducens).